Reading from the N-terminus, the 660-residue chain is Bifunctional polymyxin resistance protein ArnA (660 aa).

The tract at residues 1–304 (MKAVIFAYHD…TLGLVAGACL (304 aa)) is formyltransferase ArnAFT. The active-site Proton donor; for formyltransferase activity is His104. (6R)-10-formyltetrahydrofolate-binding positions include Arg114 and 136–140 (VKRAD). A dehydrogenase ArnADH region spans residues 314–660 (RRIRVLILGV…RSVDIAERAS (347 aa)). Residues Asp347 and 368–369 (DI) each bind NAD(+). Residues Ala393, Tyr398, and 432–433 (TS) each bind UDP-alpha-D-glucuronate. The active-site Proton acceptor; for decarboxylase activity is the Glu434. Residues Arg460, Asn492, 526-535 (KLIDGGQQKR), and Tyr613 each bind UDP-alpha-D-glucuronate. Residue Arg619 is the Proton donor; for decarboxylase activity of the active site.

This sequence in the N-terminal section; belongs to the Fmt family. UDP-L-Ara4N formyltransferase subfamily. The protein in the C-terminal section; belongs to the NAD(P)-dependent epimerase/dehydratase family. UDP-glucuronic acid decarboxylase subfamily. In terms of assembly, homohexamer, formed by a dimer of trimers.

It catalyses the reaction UDP-alpha-D-glucuronate + NAD(+) = UDP-beta-L-threo-pentopyranos-4-ulose + CO2 + NADH. The catalysed reaction is UDP-4-amino-4-deoxy-beta-L-arabinose + (6R)-10-formyltetrahydrofolate = UDP-4-deoxy-4-formamido-beta-L-arabinose + (6S)-5,6,7,8-tetrahydrofolate + H(+). Its pathway is nucleotide-sugar biosynthesis; UDP-4-deoxy-4-formamido-beta-L-arabinose biosynthesis; UDP-4-deoxy-4-formamido-beta-L-arabinose from UDP-alpha-D-glucuronate: step 1/3. It participates in nucleotide-sugar biosynthesis; UDP-4-deoxy-4-formamido-beta-L-arabinose biosynthesis; UDP-4-deoxy-4-formamido-beta-L-arabinose from UDP-alpha-D-glucuronate: step 3/3. The protein operates within bacterial outer membrane biogenesis; lipopolysaccharide biosynthesis. Bifunctional enzyme that catalyzes the oxidative decarboxylation of UDP-glucuronic acid (UDP-GlcUA) to UDP-4-keto-arabinose (UDP-Ara4O) and the addition of a formyl group to UDP-4-amino-4-deoxy-L-arabinose (UDP-L-Ara4N) to form UDP-L-4-formamido-arabinose (UDP-L-Ara4FN). The modified arabinose is attached to lipid A and is required for resistance to polymyxin and cationic antimicrobial peptides. This Salmonella paratyphi A (strain ATCC 9150 / SARB42) protein is Bifunctional polymyxin resistance protein ArnA.